A 408-amino-acid chain; its full sequence is Guanine nucleotide-binding protein alpha-14 subunit (408 aa).

GTP-binding positions include 38 to 45 (HSEELEAK), 78 to 85 (GGPSSGKS), 201 to 205 (NRISK), 216 to 222 (VHSRKAT), 241 to 245 (DVGGQ), 285 to 288 (FPNF), 325 to 328 (NKVD), and Ala-380. Residues 70–408 (SHIKILILGG…KANSKATGLS (339 aa)) form the G-alpha domain. Residues 73–86 (KILILGGPSSGKST) are G1 motif. Residue Ser-85 coordinates Mg(2+). Positions 214–222 (DIVHSRKAT) are G2 motif. Thr-222 provides a ligand contact to Mg(2+). A G3 motif region spans residues 237–246 (LLMVDVGGQR). The G4 motif stretch occupies residues 321–328 (LLFFNKVD). The tract at residues 378–383 (TTATNT) is G5 motif.

This sequence belongs to the G-alpha family. In terms of assembly, g proteins are composed of 3 units; alpha, beta and gamma. The alpha chain contains the guanine nucleotide binding site.

Functionally, guanine nucleotide-binding proteins (G proteins) are involved as modulators or transducers in various transmembrane signaling systems. This Caenorhabditis briggsae protein is Guanine nucleotide-binding protein alpha-14 subunit (gpa-14).